We begin with the raw amino-acid sequence, 506 residues long: MEKVREIVREGRRVAKEDPRRVVHSFKVGLVLALVSSFYYYQPLYDSFGVNAMWAVMTVVVVFEFSVGATLGKGLNRVAATLFAGGLGIGAHHLASMSGPTGEPILLAVFVFVQAALSTFVRFFPRVKARYDYSLLIFILTFALISVSGFREEQVVKLTHKRISTVIIGGLSCVIISIFVCPVWAGQDLHSLIASNFEKLSFFLLGNSFHYVSSDLNSITLLRKIKSWRLADFGDKYCEVVENDGAKEVDKRKKDFDNYKSVLNSKSNEESLANFAKWEPGHGQFRFRHPWKQYLAVGELIRQCAYRIHALNSYLNADNQVSVDIKKKLGEPLRRMSLESGKAMKEMSISLKKMTKPSSSDLHVQNAKSACKSLTNLLNSGILKEVEPLELVSLLTAISLLIDIINLTEKILESLHELATAAKFKNKIEHPLFSEKPKAKSFVSVRSIKCHDDHVVIIIEDDGNNDDTSKNDNGSKEVSIHEKHEDDDTHVDARCVSCGHTSVCVK.

The next 6 membrane-spanning stretches (helical) occupy residues 28-48, 52-72, 78-98, 104-124, 130-150, and 166-186; these read VGLV…YDSF, AMWA…ATLG, VAAT…ASMS, PILL…VRFF, RYDY…VSGF, and VIIG…VWAG. Residues 461–485 form a disordered region; the sequence is DDGNNDDTSKNDNGSKEVSIHEKHE. Residues 467 to 485 are compositionally biased toward basic and acidic residues; it reads DTSKNDNGSKEVSIHEKHE.

Belongs to the aromatic acid exporter (TC 2.A.85) family.

The protein localises to the membrane. Malate transporter. The protein is Aluminum-activated malate transporter 7 (ALMT7) of Arabidopsis thaliana (Mouse-ear cress).